A 316-amino-acid chain; its full sequence is PAK4-inhibitor inka1 (316 aa).

Residues 108–130 (YSEVSGSSLRGEEDDIVEEESET) are disordered. Positions 119-128 (EEDDIVEEES) are enriched in acidic residues. Inka box regions lie at residues 182 to 219 (DSQD…DLPE) and 289 to 316 (SDIA…AGFL).

The protein belongs to the INKA family. As to quaternary structure, interacts with pak4/pak5.

Its subcellular location is the nucleus. The protein localises to the cytoplasm. Its function is as follows. Inhibitor of the serine/threonine-protein kinase pak4/pak5. Acts by binding pak4/pak5 in a substrate-like manner, inhibiting the protein kinase activity. Required for the proper migration of neural crest cells during embryonic development, probably by inhibiting pak4/pak5. In Xenopus laevis (African clawed frog), this protein is PAK4-inhibitor inka1.